A 272-amino-acid polypeptide reads, in one-letter code: Acyl-[acyl-carrier-protein]--UDP-N-acetylglucosamine O-acyltransferase (272 aa).

The protein belongs to the transferase hexapeptide repeat family. LpxA subfamily. In terms of assembly, homotrimer.

It is found in the cytoplasm. The catalysed reaction is a (3R)-hydroxyacyl-[ACP] + UDP-N-acetyl-alpha-D-glucosamine = a UDP-3-O-[(3R)-3-hydroxyacyl]-N-acetyl-alpha-D-glucosamine + holo-[ACP]. Its pathway is glycolipid biosynthesis; lipid IV(A) biosynthesis; lipid IV(A) from (3R)-3-hydroxytetradecanoyl-[acyl-carrier-protein] and UDP-N-acetyl-alpha-D-glucosamine: step 1/6. Its function is as follows. Involved in the biosynthesis of lipid A, a phosphorylated glycolipid that anchors the lipopolysaccharide to the outer membrane of the cell. The polypeptide is Acyl-[acyl-carrier-protein]--UDP-N-acetylglucosamine O-acyltransferase (Rhizobium leguminosarum bv. trifolii (strain WSM2304)).